A 45-amino-acid polypeptide reads, in one-letter code: Non-specific lipid-transfer protein (45 aa).

It belongs to the plant LTP family. Expressed in pollen.

Functionally, plant non-specific lipid-transfer proteins transfer phospholipids as well as galactolipids across membranes. May play a role in wax or cutin deposition in the cell walls of expanding epidermal cells and certain secretory tissues. This is Non-specific lipid-transfer protein from Broussonetia papyrifera (Paper mulberry).